A 354-amino-acid chain; its full sequence is Homer protein homolog 1 (354 aa).

One can recognise a WH1 domain in the interval 1–110 (MGEQPIFSTR…EKFQEFKEAA (110 aa)). N-acetylglycine is present on Gly2. The disordered stretch occupies residues 114 to 173 (KEKSQEKMELTSTPSQESAGGDLQSPLTPESINGTDDERTPDVTQNSEPRAEPTQNALPF). Composition is skewed to polar residues over residues 138-147 (SPLTPESING) and 155-173 (DVTQNSEPRAEPTQNALPF). The stretch at 181-352 (KHWEAELATL…LRDNLAKLLE (172 aa)) forms a coiled coil. The required for tetramerization stretch occupies residues 290-354 (KLQEVEIRNK…DNLAKLLECS (65 aa)). The residue at position 306 (Ser306) is a Phosphoserine.

The protein belongs to the Homer family. In terms of assembly, tetramer; this tetrameric structure is critical for forming the high-order complex with SHANK1, which in turn is necessary for the structural and functional integrity of dendritic spines. Interacts with GRM1, GRM5, ITPR1, DNM3, RYR1, RYR2 and SHANK3. Interacts with IFT57 and OPHN1. Isoform 1 encodes a coiled-coil structure that mediates homo- and heteromultimerization. Interacts with SHANK1; forms high-order polymerized complex with a mesh-like network structure, at least composed of SHANK1, HOMER1 and DLGAP1; the complex formation is SHANK1 multimerization dependent. Interacts with NFATC4. Interacts with DAGLA (via PPXXF motif); this interaction is required for the cell membrane localization of DAGLA. Interacts with SRGAP2.

The protein resides in the cytoplasm. It localises to the postsynaptic density. It is found in the synapse. Its subcellular location is the cell projection. The protein localises to the dendritic spine. Functionally, postsynaptic density scaffolding protein. Binds and cross-links cytoplasmic regions of GRM1, GRM5, ITPR1, DNM3, RYR1, RYR2, SHANK1 and SHANK3. By physically linking GRM1 and GRM5 with ER-associated ITPR1 receptors, it aids the coupling of surface receptors to intracellular calcium release. May also couple GRM1 to PI3 kinase through its interaction with AGAP2. Isoform 1 regulates the trafficking and surface expression of GRM5. Isoform 3 acts as a natural dominant negative, in dynamic competition with constitutively expressed isoform 1 to regulate synaptic metabotropic glutamate function. Isoform 3, may be involved in the structural changes that occur at synapses during long-lasting neuronal plasticity and development. Forms a high-order complex with SHANK1, which in turn is necessary for the structural and functional integrity of dendritic spines. Negatively regulates T cell activation by inhibiting the calcineurin-NFAT pathway. Acts by competing with calcineurin/PPP3CA for NFAT protein binding, hence preventing NFAT activation by PPP3CA. This chain is Homer protein homolog 1, found in Homo sapiens (Human).